Consider the following 377-residue polypeptide: uncharacterized protein (377 aa).

Composition is skewed to polar residues over residues 1–11 (MSSIQGTSGSS) and 31–43 (PSGQTISFSAVGK). Disordered stretches follow at residues 1 to 43 (MSSI…AVGK), 109 to 141 (SSEEQLESPGVRNKSALKGTNRSNSHREEIARN), and 328 to 377 (SSSP…RGFQ). Basic and acidic residues predominate over residues 334–345 (EDPRSLRDRLRD).

It belongs to the chlamydial CPn_0499/CT_392/TC_0671 family.

This is an uncharacterized protein from Chlamydia trachomatis serovar D (strain ATCC VR-885 / DSM 19411 / UW-3/Cx).